We begin with the raw amino-acid sequence, 417 residues long: D-amino acid dehydrogenase (417 aa).

3-17 (IVVLGGGVVGVTSAW) is a binding site for FAD.

Belongs to the DadA oxidoreductase family. Requires FAD as cofactor.

It catalyses the reaction a D-alpha-amino acid + A + H2O = a 2-oxocarboxylate + AH2 + NH4(+). Its pathway is amino-acid degradation; D-alanine degradation; NH(3) and pyruvate from D-alanine: step 1/1. Oxidative deamination of D-amino acids. This is D-amino acid dehydrogenase from Aeromonas salmonicida (strain A449).